A 426-amino-acid polypeptide reads, in one-letter code: MSIQLPRGTQDILPDDAAIWQYIEQVAKETCETYHYQEIRTPIFEHTEIFSRGVGDTTDIVQKEMYTFSDRGGRSLTLRPEGTAAVVRSYVNHKLYASPAQPTKLYYTGPMFRYERPQAGRMRQFVQFGVEALGSASPQLDAEVLALLIAICKKLGLVNLKLVINSLGDSESRQAHREALIAHFKPSIDEFCSDCQMRLEKNPLRILDCKKDREHPLMATAPSILDYLNEESRAYFQSLKETLDLLNIPYVVDPTLVRGLDYYNHTAFELLSTAPGFGAITTLCGGGRYNGLVQEFGGPETPGIGFAFSIERFILAMKAENVDLPVPQSLDAYVVTLGDEASRLGPQLLQRLRDGGIRADKDYLGKKMKAQLKAADRYQASYTIIIGEDEIAKQQALVKQMATGEQTVVAISDLTSFLQEQIRGGN.

It belongs to the class-II aminoacyl-tRNA synthetase family. In terms of assembly, homodimer.

Its subcellular location is the cytoplasm. The catalysed reaction is tRNA(His) + L-histidine + ATP = L-histidyl-tRNA(His) + AMP + diphosphate + H(+). This chain is Histidine--tRNA ligase 1, found in Shouchella clausii (strain KSM-K16) (Alkalihalobacillus clausii).